The primary structure comprises 1576 residues: eIF-2-alpha kinase GCN2 (1576 aa).

In terms of domain architecture, RWD spans 16 to 127; the sequence is NEIEALKAIF…SIVQDYLNDW (112 aa). The tract at residues 180–204 is disordered; sequence QDELQRRSYETPQSSSKKKTNSKET. 2 consecutive Protein kinase domains span residues 235–511 and 556–928; these read VLPL…HVIR and FEEL…EEFI. Residues 562–570 and K585 each bind ATP; that span reads LGRGGFGEV. A disordered region spans residues 673–714; the sequence is YNSSADEEDPEASDISFQYSNTSDKEGSSDKDSSIEEASSVK. A compositionally biased stretch (basic and acidic residues) spans 695-706; the sequence is SDKEGSSDKDSS. D772 (proton acceptor) is an active-site residue.

The protein belongs to the protein kinase superfamily. Ser/Thr protein kinase family. GCN2 subfamily. Homodimer; homodimerization is important for kinase activation by uncharged tRNAs. Interacts (via N-terminal RWD domain) with gcn1 (via N- and C-terminus); this interaction stimulates gcn2 kinase activity in a gcn20-dependent manner in response to amino acid starvation. Interacts (via N-terminus) with the gcn1-gcn20 complex on translating ribosomes in amino acid-starved cells; gcn1 may bind near the ribosomal A-site and promotes the transfer of uncharged tRNAs from the A-site to the tRNA-binding domain in gcn2 for its subsequent kinase activation, and hence allowing fil1 translational activation and derepression of amino acid biosynthetic genes. In terms of processing, autophosphorylated.

It is found in the cytoplasm. The enzyme catalyses L-seryl-[protein] + ATP = O-phospho-L-seryl-[protein] + ADP + H(+). It catalyses the reaction L-threonyl-[protein] + ATP = O-phospho-L-threonyl-[protein] + ADP + H(+). The integrated stress response (ISR) is activated in response to conditions that promote ribosome collisions: gcn1, which acts as a ribosome collision sensor, activates gcn2. The RQC pathway and the integrated stress response (ISR) antagonize each other: hel2 prevents the activation of gcn2, while gcn2 suppresses RQC activation. Ribosome stalling-induced integrated stress response prefers ribosomes with empty A sites. The kinase activity is stimulated upon binding to uncharged tRNAs. Its function is as follows. Metabolic-stress sensing protein kinase that phosphorylates the alpha subunit of eukaryotic translation initiation factor 2 (eIF-2-alpha/SUI2) on 'Ser-52' in response to low amino acid, carbon, or purine availability. Required for adapatation to nutrient starvation by acting as a key component of the integrated stress response (ISR), by which cells alter their translational and transcriptional output in response to starvation. Converts phosphorylated eIF-2-alpha/SUI2 either to a competitive inhibitor of translation initiation factor eIF-2B, leading to a global protein synthesis repression, and thus to a reduced overall utilization of amino acids, or to a translational initiation activation of specific mRNAs, such as the transcriptional activator GCN4, and hence allowing GCN4-mediated reprogramming of transcription to alleviate nutrient depletion. Binds uncharged tRNAs. This chain is eIF-2-alpha kinase GCN2, found in Schizosaccharomyces pombe (strain 972 / ATCC 24843) (Fission yeast).